A 362-amino-acid polypeptide reads, in one-letter code: Fructose-bisphosphate aldolase (362 aa).

Residue Asp33 participates in dihydroxyacetone phosphate binding. Positions 35 and 38 each coordinate D-glyceraldehyde 3-phosphate. Beta-D-fructose 1,6-bisphosphate is bound at residue Arg42. A D-glyceraldehyde 3-phosphate-binding site is contributed by Lys106. Lys145 serves as a coordination point for dihydroxyacetone phosphate. Glu188 provides a ligand contact to D-glyceraldehyde 3-phosphate. Glu188 functions as the Proton acceptor in the catalytic mechanism. Lys230, Ser272, and Gly273 together coordinate dihydroxyacetone phosphate. Lys230 serves as the catalytic Schiff-base intermediate with dihydroxyacetone phosphate. Beta-D-fructose 1,6-bisphosphate contacts are provided by residues 272–274 and Ser300; that span reads SGG. 2 residues coordinate dihydroxyacetone phosphate: Gly302 and Arg303. Arg303 is a binding site for beta-D-fructose 1,6-bisphosphate.

The protein belongs to the class I fructose-bisphosphate aldolase family. As to quaternary structure, homotetramer. Interacts with TRAP (via cytoplasmic domain); the interaction prevents substrate binding and thereby inhibits aldolase activity. Interacts with MTRAP (via cytoplasmic domain); MTRAP phosphorylation may increase the binding to FBPA. Interact with RH1 (via cytoplasmic domain). Interacts with RH2b (via cytoplasmic domain). Interacts with RH4 (via cytoplasmic domain). Interacts with AMA1 (via cytoplasmic domain); the interaction is weak, however it may be increased upon AMA1 phosphorylation. Interacts with EBA140 (via cytoplasmic domain); the interaction is weak. Interacts with EBA175 (via cytoplasmic domain); the interaction is weak. Interacts with EBA181 (via cytoplasmic domain); the interaction is weak. Interacts with G-actin and F-actin. May interact with ACT2/actin II; the interaction inhibits FBPA catalytic activity. Interacts with human SLC4A1/band 3 (via N-terminus); the interaction inhibits FBPA catalytic activity.

It is found in the cytoplasm. It localises to the membrane. The protein localises to the host cell membrane. It catalyses the reaction beta-D-fructose 1,6-bisphosphate = D-glyceraldehyde 3-phosphate + dihydroxyacetone phosphate. It participates in carbohydrate degradation; glycolysis; D-glyceraldehyde 3-phosphate and glycerone phosphate from D-glucose: step 4/4. Its activity is regulated as follows. The cytoplasmic tail of TRAP and probably other adhesins acts as a competitive inhibitor as the binding sites of the glycolytic substrate fructose 1,6-bisphosphate and TRAP partially overlap. Inhibited by suramin, an antiparasitic drug used to treat Trypanosome-mediated infection. Plays a key role in glycolysis by catalyzing the cleavage of fructose 1,6-bisphosphate into dihydroxyacetone phosphate and glyceraldehyde 3-phosphate. Independently of its catalytic activity, connects the actin filaments, and thus the actomyosin motor, to cell surface adhesins of the thrombospondin-related anonymous protein (TRAP), the erythrocyte binding ligand (EBL) and reticulocyte binding homolog (RH) protein families; this interaction is probably involved in transducing the motor force across the parasite surface required for sporozoite and ookinete gliding motility and merozoite invasion. Stimulates actin polymerisation. The polypeptide is Fructose-bisphosphate aldolase (Plasmodium falciparum (isolate K1 / Thailand)).